Consider the following 246-residue polypeptide: 3-deoxy-manno-octulosonate cytidylyltransferase (246 aa).

It belongs to the KdsB family.

It localises to the cytoplasm. It catalyses the reaction 3-deoxy-alpha-D-manno-oct-2-ulosonate + CTP = CMP-3-deoxy-beta-D-manno-octulosonate + diphosphate. It functions in the pathway nucleotide-sugar biosynthesis; CMP-3-deoxy-D-manno-octulosonate biosynthesis; CMP-3-deoxy-D-manno-octulosonate from 3-deoxy-D-manno-octulosonate and CTP: step 1/1. Its pathway is bacterial outer membrane biogenesis; lipopolysaccharide biosynthesis. In terms of biological role, activates KDO (a required 8-carbon sugar) for incorporation into bacterial lipopolysaccharide in Gram-negative bacteria. The polypeptide is 3-deoxy-manno-octulosonate cytidylyltransferase (Bradyrhizobium diazoefficiens (strain JCM 10833 / BCRC 13528 / IAM 13628 / NBRC 14792 / USDA 110)).